A 902-amino-acid chain; its full sequence is Inter-alpha-trypsin inhibitor heavy chain H1 (902 aa).

The N-terminal stretch at 1–28 (MDGTMGLQGLLCLCLASHLALQAMPTQG) is a signal peptide. The 130-residue stretch at 29–158 (SPTDSTKGNK…KATFQLTYEE (130 aa)) folds into the VIT domain. The S-linked (Hex...) cysteine glycan is linked to Cys52. The N-linked (GlcNAc...) asparagine glycan is linked to Asn69. The residue at position 121 (Ser121) is a Phosphoserine. N-linked (GlcNAc...) asparagine glycosylation is present at Asn277. Positions 282–442 (NKNVVFVIDI…WNFLEVRALE (161 aa)) constitute a VWFA domain. Phosphothreonine is present on residues Thr394 and Thr399. Polar residues predominate over residues 637–651 (SASQPSPTHPSSSIQ). The interval 637–656 (SASQPSPTHPSSSIQKLPDR) is disordered. An O-linked (GalNAc...) serine glycan is attached at Ser639. The O-linked (GalNAc...) threonine glycan is linked to Thr644. Asp663 carries the post-translational modification Aspartate 1-(chondroitin 4-sulfate)-ester. Positions 664–902 (PHFIIRVPQK…HTDYIVPDIF (239 aa)) are excised as a propeptide. Asn741 carries N-linked (GlcNAc...) asparagine glycosylation.

This sequence belongs to the ITIH family. In terms of assembly, I-alpha-I plasma protease inhibitors are assembled from one or two heavy chains (HC) and one light chain, bikunin. Inter-alpha-inhibitor (I-alpha-I) is composed of ITIH1/HC1, ITIH2/HC2 and bikunin. Interacts with TNFAIP6 (via Link and CUB domains). Heavy chains are linked to bikunin via chondroitin 4-sulfate esterified to the alpha-carboxyl of the C-terminal aspartate after propeptide cleavage. In terms of processing, the S-linked glycan is composed of two 6-carbon sugars, possibly Glc or Gal.

It localises to the secreted. Functionally, may act as a carrier of hyaluronan in serum or as a binding protein between hyaluronan and other matrix protein, including those on cell surfaces in tissues to regulate the localization, synthesis and degradation of hyaluronan which are essential to cells undergoing biological processes. The chain is Inter-alpha-trypsin inhibitor heavy chain H1 (ITIH1) from Sus scrofa (Pig).